The following is a 1611-amino-acid chain: MSSSSADVLKISILGNESIHVGFHLLPYIFKTITTTLPSSTYVLITDTNLSAIYLNDFKASFEEAASEADNKARFLVYEVAPGEGAKSRKVKGEIEDWMLDNKCTRDTVILAFGGGVIGDLTGFVAATFMRGVKFVQIPTTLLAMVDSSVGGKTAIDTPHGKNLIGAFWQPSYIFVDLAFLTTLPTREVSNGMAEVIKTAAIWKDDDFALLESRSAEISLAASSRPTGVPTAGRFVSDRSHAQSLLLQVVSGSIYVKAHIVTIDERETGLRNLVNFGHTIGHAIEAVLTPAMLHGECVSVGIVLEAEVARQLGILSQVAVGRLTRCLQAYGLPVSLSDRRITALPASSQLSVDRLLDIMKIDKKNSGPAKKIVLLSRIGKTYEEKASVVADDVISKVLCEAVTVKAATPTKSPITMATPGSKSISNRALVLAALGKGTCRVRNLLHSDDTAVMMNALVELKGAVFSWEDGGDTIVVEGGGGILSTPAKGKELYLGNAGTASRFLTTVCAMVSGSASSERSTVITGNARMKQRPIGPLVDALTANGAKVKYLESTGCLPLDIDTDGFRGGHIQLAASVSSQYVSSILLCAPYAAEQVTLELTGGQVISQPYIDMTIAMMKQFGATVERQKDEQGNLLDIYVIPKCTYVNPPEYSVESDASSATYPLAIAAITGTTCTISNIGSSSLQGDARFAKEILEPMGCIVEQTLTSTKVTGPPVGTLRALGNVDMEPMTDAFLTASVLAAVAVKPCLPERKVEGLPETASRIYGIANQRVKECNRIQAMRDQLAKFGIETDEFDDGIIIFGKPEASLFRGASIHCYDDHRVAMAFAVLSCIIDETIIEEKRCVEKTWPNFWDDLQNKIGVAVEGVELETHNQASTSAKPVSPIDQSQSDRPIFLIGMRGAGKTYVGRMAADILSGQFTDADDVFAQESHQTVSEFVAANGWDEFRKKETEILSKFVEEHRGNHVIALGGGIVETETARETLKAHVAKGGHVVHVTRALEDIEAYLDSIGNTAVRPNWGETFADVFKRREPWYQACSSHEFYNVLEAVGGQTHEEHTKAMRAECGRFFKFITGRESNRPRLSVGNPTSFLSLTFPDVTPALIHLDELTEGADAVEFRVDLLSTTGQAPTRPALPPISFVAKQLASLRLATTLPIVFSVRSKDQGGMVPSDNAEAYGALVRLGLRCACEYVDLEVCWPEQLLDSIVQLKRETHIIASWHDWTGDMAWDGEEMKAKHVLCEKYGDVAKIVGTAKSGLDNAKLAIFVGEVQSHPGAKPLLAINMGAAGQLSRILNPILTPVTHDALPSRAAPGQLTAREILQARALTGSLPAKKFVLFGSPIAHSVSPLLHNAGFATLGLPHTYRLHESEKVDQGVLEVIRSPDFGGASVTIPLKLDIIPHLDSVSEDAKIIGAVNTVIPRGGKLHGENTDWQAIHQAAAQNLDADALSYGSSTALVIGAGGTCRAAIYAMHKLRFKTIYLFNRTPENAAKVKASFPESYNIAVVTSLSSLPEAPVVVVSTVPGNSLTLDTFSQGIYLPSEVLSRPKGVAIDLAYKPHMTALLHAAEKKEGWKVVPGVEILCLQGFKQFEEWTGKRAPQKKMRKAVLDKYFA.

A 3-dehydroquinate synthase region spans residues 1–391 (MSSSSADVLK…YEEKASVVAD (391 aa)). NAD(+) contacts are provided by residues 47–49 (DTN), 84–87 (EGAK), 115–117 (GGV), and aspartate 120. Arginine 131 is a 7-phospho-2-dehydro-3-deoxy-D-arabino-heptonate binding site. 140–141 (TT) provides a ligand contact to NAD(+). Residues aspartate 147 and lysine 153 each coordinate 7-phospho-2-dehydro-3-deoxy-D-arabino-heptonate. Lysine 162 serves as a coordination point for NAD(+). Position 163 (asparagine 163) interacts with 7-phospho-2-dehydro-3-deoxy-D-arabino-heptonate. Residues 180–183 (FLTT) and asparagine 191 contribute to the NAD(+) site. Residue glutamate 195 participates in Zn(2+) binding. Residues 195–198 (EVIK) and lysine 257 each bind 7-phospho-2-dehydro-3-deoxy-D-arabino-heptonate. Glutamate 267 (proton acceptor; for 3-dehydroquinate synthase activity) is an active-site residue. 7-phospho-2-dehydro-3-deoxy-D-arabino-heptonate contacts are provided by residues 271–275 (RNLVN) and histidine 278. Histidine 278 serves as a coordination point for Zn(2+). Histidine 282 acts as the Proton acceptor; for 3-dehydroquinate synthase activity in catalysis. Histidine 294 and lysine 363 together coordinate 7-phospho-2-dehydro-3-deoxy-D-arabino-heptonate. Residue histidine 294 coordinates Zn(2+). The segment at 404–863 (VKAATPTKSP…WDDLQNKIGV (460 aa)) is EPSP synthase. The active-site For EPSP synthase activity is the cysteine 845. The segment at 892–1093 (DRPIFLIGMR…SVGNPTSFLS (202 aa)) is shikimate kinase. 899 to 906 (GMRGAGKT) is an ATP binding site. A 3-dehydroquinase region spans residues 1094 to 1318 (LTFPDVTPAL…AAPGQLTARE (225 aa)). Residue histidine 1220 is the Proton acceptor; for 3-dehydroquinate dehydratase activity of the active site. Catalysis depends on lysine 1248, which acts as the Schiff-base intermediate with substrate; for 3-dehydroquinate dehydratase activity. Residues 1331–1611 (AKKFVLFGSP…RKAVLDKYFA (281 aa)) form a shikimate dehydrogenase region.

This sequence in the N-terminal section; belongs to the sugar phosphate cyclases superfamily. Dehydroquinate synthase family. In the 2nd section; belongs to the EPSP synthase family. The protein in the 3rd section; belongs to the shikimate kinase family. It in the 4th section; belongs to the type-I 3-dehydroquinase family. This sequence in the C-terminal section; belongs to the shikimate dehydrogenase family. As to quaternary structure, homodimer. It depends on Zn(2+) as a cofactor.

Its subcellular location is the cytoplasm. It catalyses the reaction 7-phospho-2-dehydro-3-deoxy-D-arabino-heptonate = 3-dehydroquinate + phosphate. It carries out the reaction 3-dehydroquinate = 3-dehydroshikimate + H2O. The enzyme catalyses shikimate + NADP(+) = 3-dehydroshikimate + NADPH + H(+). The catalysed reaction is shikimate + ATP = 3-phosphoshikimate + ADP + H(+). It catalyses the reaction 3-phosphoshikimate + phosphoenolpyruvate = 5-O-(1-carboxyvinyl)-3-phosphoshikimate + phosphate. The protein operates within metabolic intermediate biosynthesis; chorismate biosynthesis; chorismate from D-erythrose 4-phosphate and phosphoenolpyruvate: step 2/7. It participates in metabolic intermediate biosynthesis; chorismate biosynthesis; chorismate from D-erythrose 4-phosphate and phosphoenolpyruvate: step 3/7. It functions in the pathway metabolic intermediate biosynthesis; chorismate biosynthesis; chorismate from D-erythrose 4-phosphate and phosphoenolpyruvate: step 4/7. Its pathway is metabolic intermediate biosynthesis; chorismate biosynthesis; chorismate from D-erythrose 4-phosphate and phosphoenolpyruvate: step 5/7. The protein operates within metabolic intermediate biosynthesis; chorismate biosynthesis; chorismate from D-erythrose 4-phosphate and phosphoenolpyruvate: step 6/7. Functionally, the AROM polypeptide catalyzes 5 consecutive enzymatic reactions in prechorismate polyaromatic amino acid biosynthesis. The protein is Pentafunctional AROM polypeptide of Cryptococcus neoformans var. neoformans serotype D (strain B-3501A) (Filobasidiella neoformans).